Consider the following 84-residue polypeptide: U21-theraphotoxin-Cg1c (84 aa).

The signal sequence occupies residues 1–21; it reads MKVSVLITLAVLGVMFLLTSA. A propeptide spanning residues 22-47 is cleaved from the precursor; that stretch reads EERGSDQMDSPAWLKSMERIFQSEER. Cystine bridges form between cysteine 49–cysteine 63, cysteine 56–cysteine 68, and cysteine 62–cysteine 76.

It belongs to the neurotoxin 10 (Hwtx-1) family. 05 (F4a) subfamily. Expressed by the venom gland.

The protein resides in the secreted. Functionally, probable ion channel inhibitor. This Chilobrachys guangxiensis (Chinese earth tiger tarantula) protein is U21-theraphotoxin-Cg1c.